The chain runs to 89 residues: Small ribosomal subunit protein uS15 (89 aa).

Belongs to the universal ribosomal protein uS15 family. Part of the 30S ribosomal subunit. Forms a bridge to the 50S subunit in the 70S ribosome, contacting the 23S rRNA.

In terms of biological role, one of the primary rRNA binding proteins, it binds directly to 16S rRNA where it helps nucleate assembly of the platform of the 30S subunit by binding and bridging several RNA helices of the 16S rRNA. Functionally, forms an intersubunit bridge (bridge B4) with the 23S rRNA of the 50S subunit in the ribosome. This is Small ribosomal subunit protein uS15 from Chloroflexus aurantiacus (strain ATCC 29366 / DSM 635 / J-10-fl).